A 292-amino-acid polypeptide reads, in one-letter code: 33 kDa chaperonin (292 aa).

2 cysteine pairs are disulfide-bonded: Cys-230-Cys-232 and Cys-263-Cys-266.

Belongs to the HSP33 family. Post-translationally, under oxidizing conditions two disulfide bonds are formed involving the reactive cysteines. Under reducing conditions zinc is bound to the reactive cysteines and the protein is inactive.

The protein resides in the cytoplasm. Redox regulated molecular chaperone. Protects both thermally unfolding and oxidatively damaged proteins from irreversible aggregation. Plays an important role in the bacterial defense system toward oxidative stress. The protein is 33 kDa chaperonin of Salmonella typhimurium (strain LT2 / SGSC1412 / ATCC 700720).